A 314-amino-acid polypeptide reads, in one-letter code: Olfactory receptor 4K2 (314 aa).

At 1–25 the chain is on the extracellular side; that stretch reads MDVGNKSTMSEFVLLGLSNSWELQM. N-linked (GlcNAc...) asparagine glycosylation is present at Asn-5. The chain crosses the membrane as a helical span at residues 26–49; it reads FFFMVFSLLYVATMVGNSLIVITV. The Cytoplasmic segment spans residues 50-57; that stretch reads IVDPHLHS. The chain crosses the membrane as a helical span at residues 58–79; sequence PMYFLLTNLSIIDMSLASFATP. At 80–100 the chain is on the extracellular side; that stretch reads KMITDYLTGHKTISFDGCLTQ. Cys-97 and Cys-189 form a disulfide bridge. The helical transmembrane segment at 101–120 threads the bilayer; sequence IFFLHLFTGTEIILLMAMSF. The Cytoplasmic segment spans residues 121–139; the sequence is DRYIAICKPLHYASVISPQ. A helical membrane pass occupies residues 140–158; it reads VCVALVVASWIMGVMHSMS. Over 159–195 the chain is Extracellular; the sequence is QVIFALTLPFCGPYEVDSFFCDLPVVFQLACVDTYVL. Residues 196–219 form a helical membrane-spanning segment; sequence GLFMISTSGIIALSCFIVLFNSYV. The Cytoplasmic portion of the chain corresponds to 220–235; that stretch reads IVLVTVKHHSSRGSSK. A helical membrane pass occupies residues 236 to 258; sequence ALSTCTAHFIVVFLFFGPCIFIY. Residues 259 to 269 lie on the Extracellular side of the membrane; that stretch reads MWPLSSFLTDK. Residues 270–289 form a helical membrane-spanning segment; that stretch reads ILSVFYTIFTPTLNPIIYTL. Residues 290–314 lie on the Cytoplasmic side of the membrane; the sequence is RNQEVKIAMRKLKNRFLNFNKAMPS.

This sequence belongs to the G-protein coupled receptor 1 family.

It is found in the cell membrane. Odorant receptor. This is Olfactory receptor 4K2 (OR4K2) from Homo sapiens (Human).